Consider the following 171-residue polypeptide: MEIGQYQPNLEGDGLRIGIVQSRFNEPVCNGLADACVEELERLGVSGEDVLLVSVPGALEIPLALQKLAESGQFDALIALGAVIRGETYHFELVSNESGAGITRIGLDFNLPIANAVLTTENDKQAVARMTEKGRDAARVAVEMANLTMALDQLGDDEDEEEDEEDEEERA.

5-amino-6-(D-ribitylamino)uracil-binding positions include F24, 58–60 (ALE), and 82–84 (AVI). 87 to 88 (ET) is a (2S)-2-hydroxy-3-oxobutyl phosphate binding site. H90 acts as the Proton donor in catalysis. Position 115 (N115) interacts with 5-amino-6-(D-ribitylamino)uracil. R129 is a (2S)-2-hydroxy-3-oxobutyl phosphate binding site. The disordered stretch occupies residues 150–171 (ALDQLGDDEDEEEDEEDEEERA). Residues 154-171 (LGDDEDEEEDEEDEEERA) are compositionally biased toward acidic residues.

It belongs to the DMRL synthase family.

It catalyses the reaction (2S)-2-hydroxy-3-oxobutyl phosphate + 5-amino-6-(D-ribitylamino)uracil = 6,7-dimethyl-8-(1-D-ribityl)lumazine + phosphate + 2 H2O + H(+). Its pathway is cofactor biosynthesis; riboflavin biosynthesis; riboflavin from 2-hydroxy-3-oxobutyl phosphate and 5-amino-6-(D-ribitylamino)uracil: step 1/2. Functionally, catalyzes the formation of 6,7-dimethyl-8-ribityllumazine by condensation of 5-amino-6-(D-ribitylamino)uracil with 3,4-dihydroxy-2-butanone 4-phosphate. This is the penultimate step in the biosynthesis of riboflavin. This Burkholderia ambifaria (strain MC40-6) protein is 6,7-dimethyl-8-ribityllumazine synthase.